Here is a 486-residue protein sequence, read N- to C-terminus: Serine/threonine-protein kinase 4 (486 aa).

In terms of domain architecture, Protein kinase spans 29-280 (FDVLEKLGEG…AIQLLQHPFV (252 aa)). Residues 35 to 43 (LGEGSYGSV) and Lys-58 contribute to the ATP site. Asp-148 functions as the Proton acceptor in the catalytic mechanism. Thr-182 carries the phosphothreonine; by autocatalysis modification. The stretch at 288-324 (ILRDLINEAMDIKLKRQEAQQRELDQEDEENSEEDET) forms a coiled coil. Residues 305-332 (EAQQRELDQEDEENSEEDETDSGTMVRA) form a disordered region. Over residues 312–325 (DQEDEENSEEDETD) the composition is skewed to acidic residues. The SARAH domain maps to 432 to 479 (YEFLKTWSVDELQRRLSALDPMMEQEIEEIRQKYQSKRQPILDAIEAK).

It belongs to the protein kinase superfamily. STE Ser/Thr protein kinase family. STE20 subfamily. As to quaternary structure, homodimer; mediated via the coiled-coil region. Requires Mg(2+) as cofactor. In terms of processing, proteolytically cleaved by caspase-3 during apoptosis at Asp-325 resulting in a 37 kDa form. Proteolytic cleavage results in kinase activation and nuclear translocation of the truncated form (MST1/N).

It localises to the cytoplasm. Its subcellular location is the nucleus. The enzyme catalyses L-seryl-[protein] + ATP = O-phospho-L-seryl-[protein] + ADP + H(+). The catalysed reaction is L-threonyl-[protein] + ATP = O-phospho-L-threonyl-[protein] + ADP + H(+). With respect to regulation, the C-terminal non-catalytic region inhibits the kinase activity, the enzyme is activated by caspase-cleavage. Homodimerization and autophosphorylation of Thr-182 is also required for full activation. In terms of biological role, stress-activated, pro-apoptotic kinase which, following caspase-cleavage, enters the nucleus and induces chromatin condensation followed by internucleosomal DNA fragmentation. Key component of the Hippo signaling pathway which plays a pivotal role in organ size control and tumor suppression by restricting proliferation and promoting apoptosis. The core of this pathway is composed of a kinase cascade wherein STK3/MST2 and STK4/MST1, in complex with its regulatory protein SAV1, phosphorylates and activates LATS1/2 in complex with its regulatory protein MOB1, which in turn phosphorylates and inactivates YAP1 oncoprotein and WWTR1/TAZ. Phosphorylation of YAP1 by LATS2 inhibits its translocation into the nucleus to regulate cellular genes important for cell proliferation, cell death, and cell migration. Phosphorylates 'Ser-14' of histone H2B (H2BS14ph) during apoptosis. Phosphorylates FOXO3 upon oxidative stress, which results in its nuclear translocation and cell death initiation. The sequence is that of Serine/threonine-protein kinase 4 (STK4) from Gallus gallus (Chicken).